The following is a 139-amino-acid chain: GPI-anchored protein 53 (139 aa).

The first 17 residues, 1–17 (MKFQLLTLVSIATTTLA), serve as a signal peptide directing secretion. 2 stretches are compositionally biased toward low complexity: residues 57-69 (TITS…TTTT) and 77-101 (TSTT…SSSS). A disordered region spans residues 57–115 (TITSSSSTTTTTTAKKDKKTTSTTSASSTTTTSTKSNSTSPSSSSSKKHKSETASITKT). A glycan (N-linked (GlcNAc...) asparagine) is linked at asparagine 93. Glycine 116 carries GPI-anchor amidated glycine lipidation. Positions 117–139 (GADSVAAAAAVGGPILAALALLL) are cleaved as a propeptide — removed in mature form.

It is found in the cell membrane. The sequence is that of GPI-anchored protein 53 (PGA53) from Candida albicans (strain SC5314 / ATCC MYA-2876) (Yeast).